We begin with the raw amino-acid sequence, 167 residues long: Endoribonuclease YbeY (167 aa).

H132, H136, and H142 together coordinate Zn(2+).

This sequence belongs to the endoribonuclease YbeY family. Zn(2+) is required as a cofactor.

The protein resides in the cytoplasm. Its function is as follows. Single strand-specific metallo-endoribonuclease involved in late-stage 70S ribosome quality control and in maturation of the 3' terminus of the 16S rRNA. The chain is Endoribonuclease YbeY from Clostridium tetani (strain Massachusetts / E88).